The primary structure comprises 349 residues: MIEFDNLTYLHGKPQGTGLLKANPEDFVVVEDLGFEPDGEGEHILVRILKNGCNTRFVADALAKFLKIHAREVSFAGQKDKHAVTEQWLCARVPGKEMPDLSAFQLEGCQVLEYARHKRKLRLGALKGNAFTLVLREVSNRDDVEQRLIDICVKGVPNYFGAQRFGIGGSNLQGALRWAQTNTPVRDRNKRSFWLSAARSALFNQIVAERLKKADVNQVVDGDALQLAGRGSWFVATTEEVAELQRRVNDKELMITAALPGSGEWGTQREALAFEQAAVAAETELQALLVREKVEAARRAMLLYPQQLSWNWWDDVTVEIRFWLPAGSFATSVVRELINTTGDYAHIAE.

Substrate is bound at residue Phe27. The Nucleophile role is filled by Asp80. Asn129 provides a ligand contact to substrate. The region spanning 155 to 303 (GVPNYFGAQR…VEAARRAMLL (149 aa)) is the TRUD domain. Phe329 serves as a coordination point for substrate.

This sequence belongs to the pseudouridine synthase TruD family.

The catalysed reaction is uridine(13) in tRNA = pseudouridine(13) in tRNA. In terms of biological role, responsible for synthesis of pseudouridine from uracil-13 in transfer RNAs. In Escherichia coli (strain SMS-3-5 / SECEC), this protein is tRNA pseudouridine synthase D.